Here is a 43-residue protein sequence, read N- to C-terminus: Cytochrome b559 subunit beta (43 aa).

The helical transmembrane segment at 18–34 threads the bilayer; sequence WLAVHTLAVPSVFFLGA. Residue histidine 22 participates in heme binding.

The protein belongs to the PsbE/PsbF family. Heterodimer of an alpha subunit and a beta subunit. PSII is composed of 1 copy each of membrane proteins PsbA, PsbB, PsbC, PsbD, PsbE, PsbF, PsbH, PsbI, PsbJ, PsbK, PsbL, PsbM, PsbT, PsbX, PsbY, PsbZ, Psb30/Ycf12, peripheral proteins PsbO, CyanoQ (PsbQ), PsbU, PsbV and a large number of cofactors. It forms dimeric complexes. Requires heme b as cofactor.

It localises to the cellular thylakoid membrane. In terms of biological role, this b-type cytochrome is tightly associated with the reaction center of photosystem II (PSII). PSII is a light-driven water:plastoquinone oxidoreductase that uses light energy to abstract electrons from H(2)O, generating O(2) and a proton gradient subsequently used for ATP formation. It consists of a core antenna complex that captures photons, and an electron transfer chain that converts photonic excitation into a charge separation. This chain is Cytochrome b559 subunit beta, found in Picosynechococcus sp. (strain ATCC 27264 / PCC 7002 / PR-6) (Agmenellum quadruplicatum).